Reading from the N-terminus, the 203-residue chain is NADH-quinone oxidoreductase subunit C (203 aa).

This sequence belongs to the complex I 30 kDa subunit family. As to quaternary structure, NDH-1 is composed of 14 different subunits. Subunits NuoB, C, D, E, F, and G constitute the peripheral sector of the complex.

It localises to the cell inner membrane. The enzyme catalyses a quinone + NADH + 5 H(+)(in) = a quinol + NAD(+) + 4 H(+)(out). Functionally, NDH-1 shuttles electrons from NADH, via FMN and iron-sulfur (Fe-S) centers, to quinones in the respiratory chain. The immediate electron acceptor for the enzyme in this species is believed to be ubiquinone. Couples the redox reaction to proton translocation (for every two electrons transferred, four hydrogen ions are translocated across the cytoplasmic membrane), and thus conserves the redox energy in a proton gradient. The polypeptide is NADH-quinone oxidoreductase subunit C (Methylibium petroleiphilum (strain ATCC BAA-1232 / LMG 22953 / PM1)).